A 214-amino-acid chain; its full sequence is uncharacterized protein (214 aa).

Positions 1–17 (MWCFIVFLTIFLPTLEG) are cleaved as a signal peptide. 2 N-linked (GlcNAc...) asparagine glycosylation sites follow: Asn-88 and Asn-139.

As to expression, component of the acid-insoluble organic matrix of calcified layers of the shell (at protein level).

Its subcellular location is the secreted. This is an uncharacterized protein from Lottia gigantea (Giant owl limpet).